The sequence spans 256 residues: MKDAVVITVGNEVLKGRTVNTNASFIGNFLTYQGYRVKLGLTVMDDLEDISWAFKTAMDRGDVIVSSGGLGPTFDDMTVEGFAKAIGSDNKLNQDALAMIEEKYKNIEITPERKKMAMMPEVCKPIRNPVGTAPGLLCSVGGKKVVILPGVPMEMQALLESMRDSLAIENSCYFDESINITGIMESTFAPYVERVMREVDGVYVKSHPKNIEVVNPSLEIEVSAYDVSQEAARKKVKDAIARIRAYAETILDSKDK.

This sequence belongs to the CinA family.

The protein is Protein TV0584 of Thermoplasma volcanium (strain ATCC 51530 / DSM 4299 / JCM 9571 / NBRC 15438 / GSS1).